The following is a 232-amino-acid chain: GTP cyclohydrolase III (232 aa).

It belongs to the archaeal-type GTP cyclohydrolase family.

It catalyses the reaction GTP + 3 H2O = 2-amino-5-formylamino-6-(5-phospho-D-ribosylamino)pyrimidin-4(3H)-one + 2 phosphate + 2 H(+). Its function is as follows. Catalyzes the formation of 2-amino-5-formylamino-6-ribofuranosylamino-4(3H)-pyrimidinone ribonucleotide monophosphate and inorganic phosphate from GTP. Also has an independent pyrophosphate phosphohydrolase activity. This Saccharolobus islandicus (strain Y.G.57.14 / Yellowstone #1) (Sulfolobus islandicus) protein is GTP cyclohydrolase III.